We begin with the raw amino-acid sequence, 318 residues long: Glycine--tRNA ligase alpha subunit (318 aa).

Residues 298 to 318 form a disordered region; it reads EAGGSSPSTSRQGEAPRGESQ. Over residues 300 to 309 the composition is skewed to polar residues; that stretch reads GGSSPSTSRQ.

Belongs to the class-II aminoacyl-tRNA synthetase family. As to quaternary structure, tetramer of two alpha and two beta subunits.

Its subcellular location is the cytoplasm. It carries out the reaction tRNA(Gly) + glycine + ATP = glycyl-tRNA(Gly) + AMP + diphosphate. This chain is Glycine--tRNA ligase alpha subunit, found in Rhodopseudomonas palustris (strain BisB18).